A 296-amino-acid chain; its full sequence is Probable 6-phosphogluconolactonase 1 (296 aa).

Belongs to the glucosamine/galactosamine-6-phosphate isomerase family. 6-phosphogluconolactonase subfamily.

The catalysed reaction is 6-phospho-D-glucono-1,5-lactone + H2O = 6-phospho-D-gluconate + H(+). It functions in the pathway carbohydrate degradation; pentose phosphate pathway; D-ribulose 5-phosphate from D-glucose 6-phosphate (oxidative stage): step 2/3. Hydrolysis of 6-phosphogluconolactone to 6-phosphogluconate. This Oryza sativa subsp. japonica (Rice) protein is Probable 6-phosphogluconolactonase 1.